A 95-amino-acid polypeptide reads, in one-letter code: Aspartyl/glutamyl-tRNA(Asn/Gln) amidotransferase subunit C (95 aa).

Belongs to the GatC family. Heterotrimer of A, B and C subunits.

The catalysed reaction is L-glutamyl-tRNA(Gln) + L-glutamine + ATP + H2O = L-glutaminyl-tRNA(Gln) + L-glutamate + ADP + phosphate + H(+). It carries out the reaction L-aspartyl-tRNA(Asn) + L-glutamine + ATP + H2O = L-asparaginyl-tRNA(Asn) + L-glutamate + ADP + phosphate + 2 H(+). In terms of biological role, allows the formation of correctly charged Asn-tRNA(Asn) or Gln-tRNA(Gln) through the transamidation of misacylated Asp-tRNA(Asn) or Glu-tRNA(Gln) in organisms which lack either or both of asparaginyl-tRNA or glutaminyl-tRNA synthetases. The reaction takes place in the presence of glutamine and ATP through an activated phospho-Asp-tRNA(Asn) or phospho-Glu-tRNA(Gln). In Acidithiobacillus ferrooxidans (strain ATCC 23270 / DSM 14882 / CIP 104768 / NCIMB 8455) (Ferrobacillus ferrooxidans (strain ATCC 23270)), this protein is Aspartyl/glutamyl-tRNA(Asn/Gln) amidotransferase subunit C.